The chain runs to 23 residues: Alyteserin-1a (23 aa).

At Asn23 the chain carries Asparagine amide.

Expressed by the skin glands.

The protein localises to the secreted. It localises to the target cell membrane. Its function is as follows. Antibacterial peptide with amphipathic alpha-helical structure. Shows selective growth inhibitory activity against the Gram-negative bacteria E.coli (MIC=25 uM) Has a weak hemolytic activity against human erythrocytes (LC(50)&gt;100 uM). Is very weakly active against S.aureus (MIC=200 uM). The protein is Alyteserin-1a of Alytes obstetricans (Common midwife toad).